A 321-amino-acid polypeptide reads, in one-letter code: Ribonuclease Z (321 aa).

Zn(2+) contacts are provided by histidine 62, histidine 64, aspartate 66, histidine 67, histidine 139, aspartate 209, and histidine 268. The Proton acceptor role is filled by aspartate 66.

Belongs to the RNase Z family. In terms of assembly, homodimer. The cofactor is Zn(2+).

It catalyses the reaction Endonucleolytic cleavage of RNA, removing extra 3' nucleotides from tRNA precursor, generating 3' termini of tRNAs. A 3'-hydroxy group is left at the tRNA terminus and a 5'-phosphoryl group is left at the trailer molecule.. Zinc phosphodiesterase, which displays some tRNA 3'-processing endonuclease activity. Probably involved in tRNA maturation, by removing a 3'-trailer from precursor tRNA. This Pseudomonas putida (strain W619) protein is Ribonuclease Z.